We begin with the raw amino-acid sequence, 402 residues long: Odorant receptor 22c (402 aa).

Over 1 to 42 (MTDSGQPAIADHFYRIPRISGLIVGLWPQRIRGGGGRPWHAH) the chain is Cytoplasmic. Residues 43–63 (LLFVFAFAMVVVGAVGEVSYG) traverse the membrane as a helical segment. The Extracellular segment spans residues 64 to 73 (CVHLDNLVVA). Residues 74 to 94 (LEAFCPGTTKAVCVLKLWVFF) form a helical membrane-spanning segment. The Cytoplasmic segment spans residues 95-134 (RSNRRWAELVQRLRAILWESRRQEAQRMLVGLATTANRLS). Residues 135-155 (LLLLSSGTATNAAFTLQPLIM) form a helical membrane-spanning segment. Residues 156-173 (GLYRWIVQLPGQTELPFN) lie on the Extracellular side of the membrane. Residues 174–194 (IILPSFAVQPGVFPLTYVLLT) form a helical membrane-spanning segment. Residues 195–201 (ASGACTV) are Cytoplasmic-facing. The helical transmembrane segment at 202 to 222 (FAFSFVDGFFICSCLYICGAF) threads the bilayer. Topologically, residues 223–276 (RLVQQDIRRIFADLHGDSVDVFTEEMNAEVRHRLAQVVERHNAIIDFCTDLTRQ) are extracellular. Residues 277 to 297 (FTVIVLMHFLSAAFVLCSTIL) traverse the membrane as a helical segment. At 298-307 (DIMLNTSSLS) the chain is on the cytoplasmic side. Residues 308-328 (GLTYICYIIAALTQLFLYCFG) form a helical membrane-spanning segment. At 329-402 (GNHVSESSAA…SYITLLKTFL (74 aa)) the chain is on the extracellular side.

It belongs to the insect chemoreceptor superfamily. Heteromeric odorant receptor channel (TC 1.A.69) family. Or1a subfamily. In terms of assembly, interacts with Orco. Complexes exist early in the endomembrane system in olfactory sensory neurons (OSNs), coupling these complexes to the conserved ciliary trafficking pathway. Not expressed in either the antenna or maxillary palp.

Its subcellular location is the cell membrane. Odorant receptor which mediates acceptance or avoidance behavior, depending on its substrates. The odorant receptor repertoire encodes a large collection of odor stimuli that vary widely in identity, intensity, and duration. May form a complex with Orco to form odorant-sensing units, providing sensitive and prolonged odorant signaling and calcium permeability. In Drosophila melanogaster (Fruit fly), this protein is Odorant receptor 22c (Or22c).